Consider the following 196-residue polypeptide: UPF0134 protein MPN_501 (196 aa).

Belongs to the UPF0134 family.

This Mycoplasma pneumoniae (strain ATCC 29342 / M129 / Subtype 1) (Mycoplasmoides pneumoniae) protein is UPF0134 protein MPN_501.